A 233-amino-acid polypeptide reads, in one-letter code: DNA-directed RNA polymerase V subunit 5C (233 aa).

Belongs to the archaeal Rpo5/eukaryotic RPB5 RNA polymerase subunit family. Component of the RNA polymerase V complex. In terms of tissue distribution, expressed in flower buds and siliques.

It localises to the nucleus. DNA-dependent RNA polymerase catalyzes the transcription of DNA into RNA using the four ribonucleoside triphosphates as substrates. Component of RNA polymerase V involved in RNA-directed DNA methylation-dependent (RdDM) silencing of endogenous repeated sequences, including transposable elements. The sequence is that of DNA-directed RNA polymerase V subunit 5C (NRPE5C) from Arabidopsis thaliana (Mouse-ear cress).